The chain runs to 126 residues: Aspartate 1-decarboxylase (126 aa).

The active-site Schiff-base intermediate with substrate; via pyruvic acid is serine 25. Serine 25 carries the pyruvic acid (Ser) modification. Threonine 57 contributes to the substrate binding site. The active-site Proton donor is tyrosine 58. A substrate-binding site is contributed by 73 to 75 (GGA).

This sequence belongs to the PanD family. In terms of assembly, heterooctamer of four alpha and four beta subunits. Pyruvate is required as a cofactor. Post-translationally, is synthesized initially as an inactive proenzyme, which is activated by self-cleavage at a specific serine bond to produce a beta-subunit with a hydroxyl group at its C-terminus and an alpha-subunit with a pyruvoyl group at its N-terminus.

It is found in the cytoplasm. It catalyses the reaction L-aspartate + H(+) = beta-alanine + CO2. It participates in cofactor biosynthesis; (R)-pantothenate biosynthesis; beta-alanine from L-aspartate: step 1/1. Catalyzes the pyruvoyl-dependent decarboxylation of aspartate to produce beta-alanine. In Stenotrophomonas maltophilia (strain K279a), this protein is Aspartate 1-decarboxylase.